The sequence spans 370 residues: Cytochrome b (370 aa).

The next 4 membrane-spanning stretches (helical) occupy residues 25-45 (FGSMLLACLTLQLLTGFFLAV), 69-90 (WMMQNLHAIGASMFFICIYIHI), 105-125 (WLSGTTLLIMLMATAFFGYVL), and 170-190 (FFALHFILPFGIISLSSLHIL). Residues His75 and His89 each contribute to the heme b site. Heme b-binding residues include His174 and His188. A ubiquinone is bound at residue His193. 4 consecutive transmembrane segments (helical) span residues 218 to 238 (YKDMLMLTIMTIMLLTIVSFF), 280 to 300 (LGGALALTMSIMMLLTLPFTH), 312 to 332 (FMQLTFWTFTATFLVISWTAT), and 339 to 358 (FTTISQVAALMYFLFFISNP).

The protein belongs to the cytochrome b family. The cytochrome bc1 complex contains 3 respiratory subunits (MT-CYB, CYC1 and UQCRFS1), 2 core proteins (UQCRC1 and UQCRC2) and probably 6 low-molecular weight proteins. Heme b serves as cofactor.

The protein resides in the mitochondrion inner membrane. Its function is as follows. Component of the ubiquinol-cytochrome c reductase complex (complex III or cytochrome b-c1 complex) that is part of the mitochondrial respiratory chain. The b-c1 complex mediates electron transfer from ubiquinol to cytochrome c. Contributes to the generation of a proton gradient across the mitochondrial membrane that is then used for ATP synthesis. This is Cytochrome b (MT-CYB) from Chilabothrus strigilatus fosteri (Bimini Island boa constrictor).